Reading from the N-terminus, the 512-residue chain is Delta(14)-sterol reductase (512 aa).

8 helical membrane passes run 27–47 (IGAS…GFLC), 100–120 (AVLG…LLPA), 140–160 (ACLS…VRGP), 172–192 (YIQL…YVYL), 242–262 (SFME…AFAA), 278–298 (WTPL…VIIS), 324–344 (FGFM…SIQA), and 353–373 (ALGP…YYIF). NADP(+)-binding positions include lysine 380, arginine 384, leucine 407, tryptophan 412, and 419 to 420 (NY). 2 helical membrane-spanning segments follow: residues 418 to 438 (INYL…LAAG) and 458 to 478 (MKGA…ILLI). NADP(+) is bound by residues aspartate 484, 488 to 492 (CRRKY), and tyrosine 499.

The protein belongs to the ERG4/ERG24 family.

It localises to the membrane. The enzyme catalyses 4,4-dimethyl-5alpha-cholesta-8,24-dien-3beta-ol + NADP(+) = 4,4-dimethyl-5alpha-cholesta-8,14,24-trien-3beta-ol + NADPH + H(+). It participates in steroid biosynthesis; zymosterol biosynthesis; zymosterol from lanosterol: step 2/6. Its function is as follows. Reduces the C14=C15 double bond of 4,4-dimethyl-cholesta-8,14,24-trienol to produce 4,4-dimethyl-cholesta-8,24-dienol. The sequence is that of Delta(14)-sterol reductase (ERG3) from Septoria lycopersici (Tomato leaf spot fungus).